A 511-amino-acid polypeptide reads, in one-letter code: Probable G-protein coupled receptor 152 (511 aa).

The tract at residues M1–L20 is disordered. The Extracellular segment spans residues M1–T33. A helical membrane pass occupies residues V34–A54. Topologically, residues G55–R65 are cytoplasmic. A helical membrane pass occupies residues L66–F86. Over Q87–R105 the chain is Extracellular. A disulfide bridge links C104 with C182. Residues F106 to S126 traverse the membrane as a helical segment. At L127–P148 the chain is on the cytoplasmic side. Residues L149–F169 form a helical membrane-spanning segment. At P170–R194 the chain is on the extracellular side. The chain crosses the membrane as a helical span at residues M195–T215. Residues Q216–Q258 are Cytoplasmic-facing. A helical transmembrane segment spans residues L259–V279. The Extracellular segment spans residues Y280–D282. A helical transmembrane segment spans residues Y283–L303. The Cytoplasmic portion of the chain corresponds to R304–T511. Disordered regions lie at residues P328–V349, S361–G386, and P407–T511. Polar residues-rich tracts occupy residues P335 to L345 and V369 to G386. Over residues P419–V433 the composition is skewed to low complexity. 2 stretches are compositionally biased toward polar residues: residues P435–T453 and S462–G473.

The protein belongs to the G-protein coupled receptor 1 family.

The protein localises to the cell membrane. Orphan receptor. This Mus musculus (Mouse) protein is Probable G-protein coupled receptor 152 (Gpr152).